Reading from the N-terminus, the 92-residue chain is DNA-directed RNA polymerase subunit Rpo11 (92 aa).

It belongs to the archaeal Rpo11/eukaryotic RPB11/RPC19 RNA polymerase subunit family. Part of the 13-subunit RNA polymerase complex.

The protein localises to the cytoplasm. The catalysed reaction is RNA(n) + a ribonucleoside 5'-triphosphate = RNA(n+1) + diphosphate. In terms of biological role, DNA-dependent RNA polymerase (RNAP) catalyzes the transcription of DNA into RNA using the four ribonucleoside triphosphates as substrates. In Saccharolobus shibatae (strain ATCC 51178 / DSM 5389 / JCM 8931 / NBRC 15437 / B12) (Sulfolobus shibatae), this protein is DNA-directed RNA polymerase subunit Rpo11.